The following is a 137-amino-acid chain: uncharacterized protein (137 aa).

This sequence belongs to the ycf72 family.

The protein resides in the plastid. The protein localises to the chloroplast. This is an uncharacterized protein from Oryza nivara (Indian wild rice).